The primary structure comprises 714 residues: Protein ESC8 (714 aa).

Disordered stretches follow at residues 598–674 (APTG…ELHN) and 694–714 (RQLQ…RKGL). Polar residues predominate over residues 610–624 (TSSQRRTTVHYSSDV). Positions 628 to 650 (VSEESENEVDIDVSDDYDSEYLS) are enriched in acidic residues. A compositionally biased stretch (basic and acidic residues) spans 654–674 (TLTRKGEDRTDKSFGKRELHN). Basic residues predominate over residues 704-714 (RSLRRNARKGL).

In terms of assembly, interacts with GAL11 and SIR2.

The protein resides in the cytoplasm. Its subcellular location is the nucleus. Functionally, involved in HMR and telomere silencing via the recruitment or stabilizing of the SIR (silent information regulators) complex. This Saccharomyces cerevisiae (strain ATCC 204508 / S288c) (Baker's yeast) protein is Protein ESC8 (ESC8).